A 146-amino-acid chain; its full sequence is Large ribosomal subunit protein uL15 (146 aa).

A disordered region spans residues 1–57 (MKLHELKPAQGSRKTRNRVGRGSSSGNGKTAGRGQKGQKARSGGNIRSGFEGGQTPL). Positions 23-35 (SSSGNGKTAGRGQ) are enriched in gly residues.

This sequence belongs to the universal ribosomal protein uL15 family. Part of the 50S ribosomal subunit.

Functionally, binds to the 23S rRNA. This is Large ribosomal subunit protein uL15 from Streptococcus mutans serotype c (strain ATCC 700610 / UA159).